Here is a 483-residue protein sequence, read N- to C-terminus: Fructose-like PTS system EIIBC component (483 aa).

A PTS EIIB type-2 domain is found at 1–105 (MESSLRIVAI…IDQIFSELPT (105 aa)). Cys-13 functions as the Phosphocysteine intermediate; for EIIB activity in the catalytic mechanism. Cys-13 bears the Phosphocysteine; by EIIA mark. In terms of domain architecture, PTS EIIC type-2 spans 128-475 (VMSHLMAGVS…LWLRRKAKAA (348 aa)). The next 10 helical transmembrane spans lie at 132-152 (LMAG…LVAL), 180-200 (IGYL…ASSI), 204-224 (PAFA…LLGT), 227-247 (GAGF…VFWF), 264-284 (LIPF…IGPV), 303-323 (MKFA…GGPI), 344-364 (AIVG…TFIA), 380-400 (IVVG…AAPL), 402-422 (MITA…AFGI), and 442-462 (VGSF…FIIV).

It is found in the cell inner membrane. The catalysed reaction is D-fructose(out) + N(pros)-phospho-L-histidyl-[protein] = D-fructose 1-phosphate(in) + L-histidyl-[protein]. In terms of biological role, the phosphoenolpyruvate-dependent sugar phosphotransferase system (sugar PTS), a major carbohydrate active transport system, catalyzes the phosphorylation of incoming sugar substrates concomitantly with their translocation across the cell membrane. The enzyme II FrvAB PTS system is involved in fructose transport. In Escherichia coli (strain K12), this protein is Fructose-like PTS system EIIBC component.